A 292-amino-acid chain; its full sequence is Formamidopyrimidine-DNA glycosylase (292 aa).

The Schiff-base intermediate with DNA role is filled by Pro-2. The Proton donor role is filled by Glu-3. Lys-60 serves as the catalytic Proton donor; for beta-elimination activity. DNA is bound by residues His-109, Arg-128, and Lys-173. Residues 258–292 form an FPG-type zinc finger; sequence NVYRRTGKKCRQCKNLIERQKISGRSTHWCRKCQK. Arg-282 functions as the Proton donor; for delta-elimination activity in the catalytic mechanism.

This sequence belongs to the FPG family. In terms of assembly, monomer. Requires Zn(2+) as cofactor.

The enzyme catalyses Hydrolysis of DNA containing ring-opened 7-methylguanine residues, releasing 2,6-diamino-4-hydroxy-5-(N-methyl)formamidopyrimidine.. The catalysed reaction is 2'-deoxyribonucleotide-(2'-deoxyribose 5'-phosphate)-2'-deoxyribonucleotide-DNA = a 3'-end 2'-deoxyribonucleotide-(2,3-dehydro-2,3-deoxyribose 5'-phosphate)-DNA + a 5'-end 5'-phospho-2'-deoxyribonucleoside-DNA + H(+). In terms of biological role, involved in base excision repair of DNA damaged by oxidation or by mutagenic agents. Acts as a DNA glycosylase that recognizes and removes damaged bases. Has a preference for oxidized purines, such as 7,8-dihydro-8-oxoguanine (8-oxoG). Has AP (apurinic/apyrimidinic) lyase activity and introduces nicks in the DNA strand. Cleaves the DNA backbone by beta-delta elimination to generate a single-strand break at the site of the removed base with both 3'- and 5'-phosphates. This chain is Formamidopyrimidine-DNA glycosylase, found in Prochlorococcus marinus subsp. pastoris (strain CCMP1986 / NIES-2087 / MED4).